The following is a 1192-amino-acid chain: Pyruvate carboxylase (1192 aa).

A disordered region spans residues 1–23 (MAAPRQPEEAVDDTEFIDDHHDQ). The 453-residue stretch at 40 to 492 (QFQKILVANR…WTTFIDDTPE (453 aa)) folds into the Biotin carboxylation domain. The ATP site is built by Lys158, Glu242, and His277. The region spanning 162–359 (RQLAIRCDVP…IVAAQIQIAA (198 aa)) is the ATP-grasp domain. Arg334 is a catalytic residue. In terms of domain architecture, Pyruvate carboxyltransferase spans 578–846 (CLIMDTTWRD…DPGLNSAQVR (269 aa)). Substrate contacts are provided by residues 586 to 590 (RDAHQ) and Arg659. Asp587 is a binding site for a divalent metal cation. Residues Lys755, His785, and His787 each contribute to the a divalent metal cation site. The residue at position 755 (Lys755) is an N6-carboxylysine. Thr920 provides a ligand contact to substrate. The region spanning 1115–1190 (KAELGDSSQV…DGQDLVCKIV (76 aa)) is the Biotinyl-binding domain. Lys1156 bears the N6-biotinyllysine mark.

Biotin serves as cofactor. Zn(2+) is required as a cofactor.

The protein resides in the cytoplasm. It catalyses the reaction hydrogencarbonate + pyruvate + ATP = oxaloacetate + ADP + phosphate + H(+). It participates in carbohydrate biosynthesis; gluconeogenesis. Functionally, pyruvate carboxylase catalyzes a 2-step reaction, involving the ATP-dependent carboxylation of the covalently attached biotin in the first step and the transfer of the carboxyl group to pyruvate in the second. In Aspergillus niger, this protein is Pyruvate carboxylase (pyc).